We begin with the raw amino-acid sequence, 469 residues long: Adenosylhomocysteinase (469 aa).

Residues T58, D133, and E195 each coordinate substrate. 196–198 (TTT) serves as a coordination point for NAD(+). Substrate is bound by residues K225 and D229. NAD(+) is bound by residues N230, 259–264 (GFGDVG), E282, N317, 338–340 (IGH), and N383.

The protein belongs to the adenosylhomocysteinase family. The cofactor is NAD(+).

The protein localises to the cytoplasm. The enzyme catalyses S-adenosyl-L-homocysteine + H2O = L-homocysteine + adenosine. It participates in amino-acid biosynthesis; L-homocysteine biosynthesis; L-homocysteine from S-adenosyl-L-homocysteine: step 1/1. Functionally, may play a key role in the regulation of the intracellular concentration of adenosylhomocysteine. The polypeptide is Adenosylhomocysteinase (Rhodopseudomonas palustris (strain ATCC BAA-98 / CGA009)).